The chain runs to 348 residues: Centromere protein L (348 aa).

Belongs to the CENP-L/IML3 family.

The protein localises to the nucleus. Its subcellular location is the chromosome. It localises to the centromere. In terms of biological role, probable component of a centromeric complex involved in assembly of kinetochore proteins, mitotic progression and chromosome segregation. In Xenopus tropicalis (Western clawed frog), this protein is Centromere protein L (cenpl).